The primary structure comprises 408 residues: Bone morphogenetic protein 4 (408 aa).

A signal peptide spans 1–19 (MIPGNRMLMVVLLCQVLLG). Residues 20-292 (GATDASLIPE…HTLTRRRAKR (273 aa)) constitute a propeptide that is removed on maturation. Serine 91 carries the post-translational modification Phosphoserine. Residues 91–113 (SGEEEEEEQSQGTGLEYPERPAS) are disordered. Asparagine 144 and asparagine 209 each carry an N-linked (GlcNAc...) asparagine glycan. The interval 281–307 (RGHTLTRRRAKRSPKHHPQRSRKKNKN) is disordered. A compositionally biased stretch (basic residues) spans 284 to 307 (TLTRRRAKRSPKHHPQRSRKKNKN). 3 cysteine pairs are disulfide-bonded: cysteine 308-cysteine 373, cysteine 337-cysteine 405, and cysteine 341-cysteine 407. Asparagine 350 and asparagine 365 each carry an N-linked (GlcNAc...) asparagine glycan.

It belongs to the TGF-beta family. In terms of assembly, homodimer; disulfide-linked. Interacts with GREM2. Part of a complex consisting of TWSG1 and CHRD. Interacts with the serine proteases, HTRA1 and HTRA3; the interaction with either inhibits BMP4-mediated signaling. The HTRA protease activity is required for this inhibition. Interacts with SOSTDC1. Interacts with FBN1 (via N-terminal domain) and FBN2. Interacts with type I receptor BMPR1A. Interacts with type II receptor BMPR2. Interacts with FSTL1; this interaction inhibits the activation of the BMP4/Smad1/5/8 signaling pathway. Interacts with SCUBE3. Interacts with TGFBR3.

It is found in the secreted. The protein resides in the extracellular space. The protein localises to the extracellular matrix. Growth factor of the TGF-beta superfamily that plays essential roles in many developmental processes, including neurogenesis, vascular development, angiogenesis and osteogenesis. Acts in concert with PTHLH/PTHRP to stimulate ductal outgrowth during embryonic mammary development and to inhibit hair follicle induction. Initiates the canonical BMP signaling cascade by associating with type I receptor BMPR1A and type II receptor BMPR2. Once all three components are bound together in a complex at the cell surface, BMPR2 phosphorylates and activates BMPR1A. In turn, BMPR1A propagates signal by phosphorylating SMAD1/5/8 that travel to the nucleus and act as activators and repressors of transcription of target genes. Positively regulates the expression of odontogenic development regulator MSX1 via inducing the IPO7-mediated import of SMAD1 to the nucleus. Required for MSX1-mediated mesenchymal molar tooth bud development beyond the bud stage, via promoting Wnt signaling. Acts as a positive regulator of odontoblast differentiation during mesenchymal tooth germ formation, expression is repressed during the bell stage by MSX1-mediated inhibition of CTNNB1 signaling. Able to induce its own expression in dental mesenchymal cells and also in the neighboring dental epithelial cells via an MSX1-mediated pathway. Can also signal through non-canonical BMP pathways such as ERK/MAP kinase, PI3K/Akt, or SRC cascades. For example, induces SRC phosphorylation which, in turn, activates VEGFR2, leading to an angiogenic response. In Rattus norvegicus (Rat), this protein is Bone morphogenetic protein 4.